A 660-amino-acid polypeptide reads, in one-letter code: Phosphatidylinositol-binding clathrin assembly protein (660 aa).

Ser-2 is subject to N-acetylserine. An ENTH domain is found at 14 to 145; it reads QHSVTGSAVS…VSYRQVAFDF (132 aa). Ser-16 and Ser-20 each carry phosphoserine. The segment at 221-294 is interaction with PIMREG; the sequence is KYFDMKKNQC…LEGKKIKDST (74 aa). Lys-238 participates in a covalent cross-link: Glycyl lysine isopeptide (Lys-Gly) (interchain with G-Cter in SUMO2). Ser-303 and Ser-315 each carry phosphoserine. Over residues 556–566 the composition is skewed to polar residues; the sequence is GTTKNDVSWSQ. Residues 556–580 form a disordered region; the sequence is GTTKNDVSWSQPGEKKLTGGSNWQP.

Belongs to the PICALM/SNAP91 family. In terms of assembly, binds to clathrin; involves primarily the C-terminal sequences, but the full-length protein is required for full binding capacity. Binds phosphatidylinositol 4,5- bisphosphate. Interacts with PIMREG; this interaction may change the subcellular location into the nucleus. Interacts with AP2A1 (via its alpha-appendage domain). Interacts (via N-terminus) with VAMP2; VAMP3; VAMP7 and VAMP8 (Via N-terminus). Interacts with LC3/MAP1LC3A. Skins and livers of 1-week-old mice.

The protein resides in the cell membrane. The protein localises to the membrane. It is found in the clathrin-coated pit. Its subcellular location is the golgi apparatus. It localises to the cytoplasmic vesicle. The protein resides in the clathrin-coated vesicle. The protein localises to the nucleus. Cytoplasmic adapter protein that plays a critical role in clathrin-mediated endocytosis which is important in processes such as internalization of cell receptors, synaptic transmission or removal of apoptotic cells. Recruits AP-2 and attaches clathrin triskelions to the cytoplasmic side of plasma membrane leading to clathrin-coated vesicles (CCVs) assembly. Furthermore, regulates clathrin-coated vesicle size and maturation by directly sensing and driving membrane curvature. In addition to binding to clathrin, mediates the endocytosis of small R-SNARES (Soluble NSF Attachment Protein REceptors) between plasma membranes and endosomes including VAMP2, VAMP3, VAMP4, VAMP7 or VAMP8. In turn, PICALM-dependent SNARE endocytosis is required for the formation and maturation of autophagic precursors. Modulates thereby autophagy and the turnover of autophagy substrates such as MAPT/TAU or amyloid precursor protein cleaved C-terminal fragment (APP-CTF). This Mus musculus (Mouse) protein is Phosphatidylinositol-binding clathrin assembly protein (Picalm).